The primary structure comprises 319 residues: Cytochrome f (319 aa).

An N-terminal signal peptide occupies residues 1–35; sequence MQNKDACKSLSSWVSLSISLLVLTVPLIWPYNSTA. Residues Phe-36, Cys-56, Cys-59, and His-60 each coordinate heme. The chain crosses the membrane as a helical span at residues 285 to 305; that stretch reads IQGLLVFFASVILAQIFLVLK.

It belongs to the cytochrome f family. The 4 large subunits of the cytochrome b6-f complex are cytochrome b6, subunit IV (17 kDa polypeptide, petD), cytochrome f and the Rieske protein, while the 4 small subunits are PetG, PetL, PetM and PetN. The complex functions as a dimer. Heme is required as a cofactor.

It localises to the plastid. It is found in the chloroplast thylakoid membrane. Functionally, component of the cytochrome b6-f complex, which mediates electron transfer between photosystem II (PSII) and photosystem I (PSI), cyclic electron flow around PSI, and state transitions. The chain is Cytochrome f from Staurastrum punctulatum (Green alga).